The sequence spans 305 residues: Insulin-like peptide (305 aa).

Positions 1-22 are cleaved as a signal peptide; that stretch reads MNLSSVYVLASLAVVCLLVKET. Intrachain disulfides connect Cys-28–Cys-87, Cys-40–Cys-100, and Cys-86–Cys-91. Positions 52–76 are cleaved as a propeptide — connecting peptide; sequence SVSKRAIDFISEQQAKDYMGAMPHI. The segment at 102 to 114 is d; that stretch reads PYSTAPATATPVR. Residues 102–305 constitute a propeptide, d/E peptide; that stretch reads PYSTAPATAT…RDSYHLTELR (204 aa). Over residues 107–118 the composition is skewed to low complexity; it reads PATATPVRTTEP. Disordered regions lie at residues 107–130 and 236–305; these read PATA…PLDG and HNQT…TELR. Positions 115–305 are e; that stretch reads TTEPQPEEAE…RDSYHLTELR (191 aa). Positions 119 to 128 are enriched in acidic residues; it reads QPEEAEDDPL. 2 stretches are compositionally biased toward basic and acidic residues: residues 236 to 245 and 291 to 305; these read HNQTDKKEPT and RRIE…TELR.

Belongs to the insulin family.

The protein resides in the secreted. In Branchiostoma californiense (California lancelet), this protein is Insulin-like peptide (ILP).